A 159-amino-acid chain; its full sequence is Protein Smg homolog (159 aa).

It belongs to the Smg family.

This chain is Protein Smg homolog, found in Shewanella amazonensis (strain ATCC BAA-1098 / SB2B).